The following is a 474-amino-acid chain: Nitric oxide reductase subunit B (474 aa).

A helical transmembrane segment spans residues 19–39; that stretch reads YFVFALILFVGQVLFGLIMGL. Heme b is bound at residue histidine 60. 8 helical membrane passes run 61–81, 95–115, 145–165, 169–189, 207–227, 243–263, 270–290, and 308–328; these read TNLL…YLIP, IILF…YLFV, IGIV…MLKG, VVST…LFAF, HLWV…FVLI, VIIA…FFWI, LWVG…MVLF, and SLWA…WGFM. Histidine 207, histidine 258, and histidine 259 together coordinate Fe cation. The heme b site is built by histidine 347 and histidine 349. A run of 3 helical transmembrane segments spans residues 348 to 368, 390 to 410, and 433 to 453; these read GHLA…SYAM, FWLM…AGVV, and LAIF…GLVC.

Belongs to the heme-copper respiratory oxidase family. Heterodimer of cytochromes b (large subunit) and c (small subunit).

It is found in the cell membrane. The catalysed reaction is nitrous oxide + 2 Fe(III)-[cytochrome c] + H2O = 2 nitric oxide + 2 Fe(II)-[cytochrome c] + 2 H(+). Its pathway is nitrogen metabolism; nitrate reduction (denitrification); dinitrogen from nitrate: step 3/4. Its function is as follows. Component of the anaerobic respiratory chain that transforms nitrate to dinitrogen (denitrification). NorB is the catalytic subunit of the enzyme complex. Shows proton pump activity across the membrane in denitrifying bacterial cells. The mononitrogen reduction is probably coupled to electron transport phosphorylation. The protein is Nitric oxide reductase subunit B (norB) of Stutzerimonas stutzeri (Pseudomonas stutzeri).